The sequence spans 490 residues: Costunolide synthase (490 aa).

Residues 3–23 form a helical; Signal-anchor for type II membrane protein membrane-spanning segment; that stretch reads PLTIVSLAVASFLLFAFWALS. Asn-167 and Asn-255 each carry an N-linked (GlcNAc...) asparagine glycan. Cys-432 contacts heme.

It belongs to the cytochrome P450 family. Heme serves as cofactor.

It localises to the membrane. It catalyses the reaction germacra-1(10),4,11(13)-trien-12-oate + reduced [NADPH--hemoprotein reductase] + O2 = (+)-costunolide + oxidized [NADPH--hemoprotein reductase] + 2 H2O. Its pathway is secondary metabolite biosynthesis; terpenoid biosynthesis. In terms of biological role, involved in the biosynthesis of germacrene-derived sesquiterpene lactones. Component of the parthenolide biosynthetic pathway; parthenolide and conjugates are promising anti-cancer drugs highly active against colon cancer cells. Hydroxylates germacrene A acid to 6-alpha-hydroxy-germacrne A acid, a precursor of sesquiterpene lactones that spontaneously undergoes a lactonization which yields costunolide. The sequence is that of Costunolide synthase from Lactuca sativa (Garden lettuce).